Reading from the N-terminus, the 50-residue chain is Large ribosomal subunit protein bL32A (50 aa).

The segment covering 1 to 19 (MAVPKRRKSRSNTRHRRSQ) has biased composition (basic residues). The tract at residues 1–21 (MAVPKRRKSRSNTRHRRSQWK) is disordered.

The protein belongs to the bacterial ribosomal protein bL32 family.

The chain is Large ribosomal subunit protein bL32A from Saccharopolyspora erythraea (strain ATCC 11635 / DSM 40517 / JCM 4748 / NBRC 13426 / NCIMB 8594 / NRRL 2338).